The sequence spans 263 residues: Small ribosomal subunit protein uS2 (263 aa).

It belongs to the universal ribosomal protein uS2 family.

The sequence is that of Small ribosomal subunit protein uS2 from Roseiflexus castenholzii (strain DSM 13941 / HLO8).